The chain runs to 309 residues: Protein FdhE (309 aa).

The protein belongs to the FdhE family.

Its subcellular location is the cytoplasm. In terms of biological role, necessary for formate dehydrogenase activity. The chain is Protein FdhE from Escherichia coli O45:K1 (strain S88 / ExPEC).